Reading from the N-terminus, the 217-residue chain is 3,4-dihydroxy-2-butanone 4-phosphate synthase (217 aa).

D-ribulose 5-phosphate is bound by residues 37-38 (RE), D42, 150-154 (RGGHT), and E174. Mg(2+) is bound at residue E38. H153 is a Mg(2+) binding site.

The protein belongs to the DHBP synthase family. Homodimer. Mg(2+) is required as a cofactor. Requires Mn(2+) as cofactor.

It catalyses the reaction D-ribulose 5-phosphate = (2S)-2-hydroxy-3-oxobutyl phosphate + formate + H(+). It functions in the pathway cofactor biosynthesis; riboflavin biosynthesis; 2-hydroxy-3-oxobutyl phosphate from D-ribulose 5-phosphate: step 1/1. Functionally, catalyzes the conversion of D-ribulose 5-phosphate to formate and 3,4-dihydroxy-2-butanone 4-phosphate. The chain is 3,4-dihydroxy-2-butanone 4-phosphate synthase from Cronobacter sakazakii (strain ATCC BAA-894) (Enterobacter sakazakii).